The primary structure comprises 1889 residues: Vacuolar membrane-associated protein IML1 (1889 aa).

Disordered stretches follow at residues 1 to 74, 515 to 540, 551 to 570, 716 to 808, 838 to 900, and 1252 to 1272; these read MPPP…SRLR, QPGQVQRKSKVDISQGSTPKQTTLTF, SPNKRIEGSRNGEPAGPLSS, ARLP…LKAP, AGAS…DSPT, and PPNERRLQGSGSTRSKKDTNP. A compositionally biased stretch (polar residues) spans 47–60; it reads YSNSPGDTVSSNST. Residues 729–742 show a composition bias toward basic and acidic residues; that stretch reads RCRDHEETPRRQAL. 3 stretches are compositionally biased toward polar residues: residues 747-766, 787-804, and 840-853; these read PLGTSYTDRRPSTASQQTLP, KSMSAQSNKSEPKASSSP, and ASKTLTPSRSSQDL. Residues 865-877 show a composition bias toward low complexity; it reads SSSRRLTGGTSTS. Residues 1331–1417 enclose the DEP domain; the sequence is ENGGVRMQNR…DGQYFYQISN (87 aa). Disordered stretches follow at residues 1424–1484 and 1724–1824; these read PPGW…GNKP and PTPL…WSTW. 2 stretches are compositionally biased toward low complexity: residues 1737-1789 and 1801-1811; these read SPAL…PGLT and PSTSATTTTAC.

It belongs to the IML1 family.

The protein localises to the vacuole membrane. The protein is Vacuolar membrane-associated protein IML1 (IML1) of Chaetomium globosum (strain ATCC 6205 / CBS 148.51 / DSM 1962 / NBRC 6347 / NRRL 1970) (Soil fungus).